The chain runs to 385 residues: Cytochrome b (385 aa).

A run of 4 helical transmembrane segments spans residues 32 to 52 (LGSLLGLCLVIQILTGIFMAM), 76 to 98 (WLLRYMHANGASFFFICMYMHIA), 113 to 133 (VWIVGVIIFVLTMAAAFLGYC), and 179 to 199 (FFALHYLVPFIIAALVVMHFM). Heme b contacts are provided by histidine 82 and histidine 96. Heme b is bound by residues histidine 183 and histidine 197. Histidine 202 serves as a coordination point for a ubiquinone. Transmembrane regions (helical) follow at residues 225–245 (FIFKDLITVFVFLIFFSLFVF), 289–309 (LLGVITMFAAILVLLVLPITD), 321–341 (LSKFFFFLFIFNFLLLGQIGQ), and 348–368 (FVLMGQIATFLYFAYFIIIVP).

This sequence belongs to the cytochrome b family. In terms of assembly, fungal cytochrome b-c1 complex contains 10 subunits; 3 respiratory subunits, 2 core proteins and 5 low-molecular weight proteins. Cytochrome b-c1 complex is a homodimer. Requires heme b as cofactor.

The protein resides in the mitochondrion inner membrane. In terms of biological role, component of the ubiquinol-cytochrome c reductase complex (complex III or cytochrome b-c1 complex) that is part of the mitochondrial respiratory chain. The b-c1 complex mediates electron transfer from ubiquinol to cytochrome c. Contributes to the generation of a proton gradient across the mitochondrial membrane that is then used for ATP synthesis. The polypeptide is Cytochrome b (COB) (Candida glabrata (strain ATCC 2001 / BCRC 20586 / JCM 3761 / NBRC 0622 / NRRL Y-65 / CBS 138) (Yeast)).